The sequence spans 343 residues: Heat-inducible transcription repressor HrcA (343 aa).

This sequence belongs to the HrcA family.

In terms of biological role, negative regulator of class I heat shock genes (grpE-dnaK-dnaJ and groELS operons). Prevents heat-shock induction of these operons. The sequence is that of Heat-inducible transcription repressor HrcA from Mycolicibacterium smegmatis (strain ATCC 700084 / mc(2)155) (Mycobacterium smegmatis).